Reading from the N-terminus, the 701-residue chain is Ribosomal RNA large subunit methyltransferase K/L (701 aa).

The 112-residue stretch at 44-155 folds into the THUMP domain; it reads QAYKICLWSR…SDKLTVYLDL (112 aa).

The protein belongs to the methyltransferase superfamily. RlmKL family.

It is found in the cytoplasm. It carries out the reaction guanosine(2445) in 23S rRNA + S-adenosyl-L-methionine = N(2)-methylguanosine(2445) in 23S rRNA + S-adenosyl-L-homocysteine + H(+). The catalysed reaction is guanosine(2069) in 23S rRNA + S-adenosyl-L-methionine = N(2)-methylguanosine(2069) in 23S rRNA + S-adenosyl-L-homocysteine + H(+). Functionally, specifically methylates the guanine in position 2445 (m2G2445) and the guanine in position 2069 (m7G2069) of 23S rRNA. The protein is Ribosomal RNA large subunit methyltransferase K/L of Pseudoalteromonas atlantica (strain T6c / ATCC BAA-1087).